The chain runs to 395 residues: S-adenosylmethionine synthase (395 aa).

Residue glutamate 10 coordinates Mg(2+). Histidine 16 provides a ligand contact to ATP. K(+) is bound at residue glutamate 44. L-methionine is bound by residues glutamate 57 and glutamine 100. ATP is bound by residues 168–170 (DGK), 236–239 (SGRF), 253–254 (RK), alanine 270, lysine 274, and lysine 278. L-methionine is bound at residue lysine 278.

The protein belongs to the AdoMet synthase family. Homotetramer. Requires Mn(2+) as cofactor. Mg(2+) is required as a cofactor. The cofactor is Co(2+). It depends on K(+) as a cofactor.

Its subcellular location is the cytoplasm. The catalysed reaction is L-methionine + ATP + H2O = S-adenosyl-L-methionine + phosphate + diphosphate. It functions in the pathway amino-acid biosynthesis; S-adenosyl-L-methionine biosynthesis; S-adenosyl-L-methionine from L-methionine: step 1/1. In terms of biological role, catalyzes the formation of S-adenosylmethionine from methionine and ATP. The reaction comprises two steps that are both catalyzed by the same enzyme: formation of S-adenosylmethionine (AdoMet) and triphosphate, and subsequent hydrolysis of the triphosphate. This is S-adenosylmethionine synthase (METK) from Populus deltoides (Eastern poplar).